Here is a 169-residue protein sequence, read N- to C-terminus: Probable chemoreceptor glutamine deamidase CheD (169 aa).

The protein belongs to the CheD family.

It catalyses the reaction L-glutaminyl-[protein] + H2O = L-glutamyl-[protein] + NH4(+). Functionally, probably deamidates glutamine residues to glutamate on methyl-accepting chemotaxis receptors (MCPs), playing an important role in chemotaxis. The chain is Probable chemoreceptor glutamine deamidase CheD from Solibacter usitatus (strain Ellin6076).